The chain runs to 325 residues: Transcription initiation factor IIB (325 aa).

The segment at 19–52 adopts a TFIIB-type zinc-finger fold; sequence NKLWCMVCRIQDPDIIEDYAKGDLICRGCGVVVG. Zn(2+) contacts are provided by Cys-23, Cys-26, Cys-44, and Cys-47. A run of 2 repeats spans residues 131 to 207 and 227 to 303.

The protein belongs to the TFIIB family.

Its subcellular location is the nucleus. In terms of biological role, general transcription factor that plays a role in transcription initiation by RNA polymerase II (Pol II). Involved in the pre-initiation complex (PIC) formation and Pol II recruitment at promoter DNA. This is Transcription initiation factor IIB (gtf2b) from Dictyostelium discoideum (Social amoeba).